Consider the following 194-residue polypeptide: Flagellin A2 (194 aa).

Residues 1-12 constitute a propeptide that is removed on maturation; that stretch reads MFEFITDEDERG.

It belongs to the archaeal flagellin family. Post-translationally, glycosylated.

Its subcellular location is the archaeal flagellum. Its function is as follows. Flagellin is the subunit protein which polymerizes to form the filaments of archaeal flagella. The sequence is that of Flagellin A2 (flaA2) from Halobacterium salinarum (strain ATCC 700922 / JCM 11081 / NRC-1) (Halobacterium halobium).